The following is a 155-amino-acid chain: DNA gyrase inhibitor (155 aa).

Belongs to the DNA gyrase inhibitor family. Interacts with DNA gyrase.

The protein localises to the cytoplasm. Functionally, inhibits the supercoiling activity of DNA gyrase. Acts by inhibiting DNA gyrase at an early step, prior to (or at the step of) binding of DNA by the gyrase. It protects cells against toxins that target DNA gyrase, by inhibiting activity of these toxins and reducing the formation of lethal double-strand breaks in the cell. This chain is DNA gyrase inhibitor, found in Edwardsiella piscicida.